The following is a 273-amino-acid chain: ABC transporter glutamine-binding protein GlnH (273 aa).

A signal peptide spans 1–20 (MKKIFSLALISLFAVILLAA). Cys21 is lipidated: N-palmitoyl cysteine. The S-diacylglycerol cysteine moiety is linked to residue Cys21.

This sequence belongs to the bacterial solute-binding protein 3 family. The complex is composed of two ATP-binding proteins (GlnQ), two transmembrane proteins (GlnM and GlnP) and a solute-binding protein (GlnH).

It localises to the cell membrane. Part of the ABC transporter complex GlnHMPQ involved in glutamine transport. The protein is ABC transporter glutamine-binding protein GlnH (glnH) of Bacillus subtilis (strain 168).